The chain runs to 735 residues: Photosystem I P700 chlorophyll a apoprotein A2 (735 aa).

The next 8 membrane-spanning stretches (helical) occupy residues 46–69 (LFSTHFGHLAIIGLWVSGNLFHIA), 135–158 (LYQGSIFMMILSAWALFAGWLHLQ), 175–199 (LNHHLAVLFGFSSIAWTGHLVHVAI), 273–291 (IAHHHLAIGCLFVIAGHMY), 333–356 (LHFQLGLALASLGVVTSLVAQHMY), 372–398 (AALYTHHQYIAIALMCGAFAHGAIFFI), 420–442 (AIISHLSWVSLFLGFHTLGLYVH), and 518–536 (FLVHHAIALGLHTTTLILV). The [4Fe-4S] cluster site is built by C560 and C569. A run of 2 helical transmembrane segments spans residues 576 to 597 (AFYLAVFWALNTVGWLTFYWHW) and 644 to 666 (LAVWSWMFLFGHLVWATGFMFLI). Chlorophyll a is bound by residues H655, M663, and Y671. W672 is a phylloquinone binding site. A helical membrane pass occupies residues 708–728 (VVGLAHFSVGYVLTYAAFLIA).

The protein belongs to the PsaA/PsaB family. As to quaternary structure, the PsaA/B heterodimer binds the P700 chlorophyll special pair and subsequent electron acceptors. PSI consists of a core antenna complex that captures photons, and an electron transfer chain that converts photonic excitation into a charge separation. The cyanobacterial PSI reaction center is composed of one copy each of PsaA,B,C,D,E,F,I,J,K,L,M and X, and forms trimeric complexes. PSI electron transfer chain: 5 chlorophyll a, 1 chlorophyll a', 2 phylloquinones and 3 4Fe-4S clusters. PSI core antenna: 90 chlorophyll a, 22 carotenoids, 3 phospholipids and 1 galactolipid. P700 is a chlorophyll a/chlorophyll a' dimer, A0 is one or more chlorophyll a, A1 is one or both phylloquinones and FX is a shared 4Fe-4S iron-sulfur center. is required as a cofactor.

It localises to the cellular thylakoid membrane. It carries out the reaction reduced [plastocyanin] + hnu + oxidized [2Fe-2S]-[ferredoxin] = oxidized [plastocyanin] + reduced [2Fe-2S]-[ferredoxin]. Its function is as follows. PsaA and PsaB bind P700, the primary electron donor of photosystem I (PSI), as well as the electron acceptors A0, A1 and FX. PSI is a plastocyanin/cytochrome c6-ferredoxin oxidoreductase, converting photonic excitation into a charge separation, which transfers an electron from the donor P700 chlorophyll pair to the spectroscopically characterized acceptors A0, A1, FX, FA and FB in turn. Oxidized P700 is reduced on the lumenal side of the thylakoid membrane by plastocyanin or cytochrome c6. This chain is Photosystem I P700 chlorophyll a apoprotein A2, found in Synechococcus sp. (strain CC9902).